The following is a 366-amino-acid chain: Beta sliding clamp (366 aa).

The protein belongs to the beta sliding clamp family. In terms of assembly, forms a ring-shaped head-to-tail homodimer around DNA which binds and tethers DNA polymerases and other proteins to the DNA. The DNA replisome complex has a single clamp-loading complex (3 tau and 1 each of delta, delta', psi and chi subunits) which binds 3 Pol III cores (1 core on the leading strand and 2 on the lagging strand) each with a beta sliding clamp dimer. Additional proteins in the replisome are other copies of gamma, psi and chi, Ssb, DNA helicase and RNA primase.

It localises to the cytoplasm. In terms of biological role, confers DNA tethering and processivity to DNA polymerases and other proteins. Acts as a clamp, forming a ring around DNA (a reaction catalyzed by the clamp-loading complex) which diffuses in an ATP-independent manner freely and bidirectionally along dsDNA. Initially characterized for its ability to contact the catalytic subunit of DNA polymerase III (Pol III), a complex, multichain enzyme responsible for most of the replicative synthesis in bacteria; Pol III exhibits 3'-5' exonuclease proofreading activity. The beta chain is required for initiation of replication as well as for processivity of DNA replication. This is Beta sliding clamp (dnaN) from Salmonella typhimurium (strain LT2 / SGSC1412 / ATCC 700720).